The chain runs to 271 residues: Undecaprenyl-diphosphatase (271 aa).

8 helical membrane passes run 5-25, 45-65, 86-106, 114-134, 149-169, 189-209, 226-246, and 251-271; these read YALF…FLPV, AATF…AVFW, TLSL…GLAI, LFGP…LIIA, ISYK…WPGF, AAEF…GLDL, VGFI…LALI, and FIPF…VFVA.

This sequence belongs to the UppP family.

The protein resides in the cell inner membrane. The enzyme catalyses di-trans,octa-cis-undecaprenyl diphosphate + H2O = di-trans,octa-cis-undecaprenyl phosphate + phosphate + H(+). Functionally, catalyzes the dephosphorylation of undecaprenyl diphosphate (UPP). Confers resistance to bacitracin. This is Undecaprenyl-diphosphatase from Aeromonas hydrophila subsp. hydrophila (strain ATCC 7966 / DSM 30187 / BCRC 13018 / CCUG 14551 / JCM 1027 / KCTC 2358 / NCIMB 9240 / NCTC 8049).